Consider the following 220-residue polypeptide: Sec-independent protein translocase protein TatB (220 aa).

Residues 1 to 21 (MFDIGFSELLLVLVIGLVVLG) traverse the membrane as a helical segment. The interval 190 to 220 (VTKQQIDTIDSHGTDLSSAGPSRIHQPGGDQ) is disordered.

This sequence belongs to the TatB family. In terms of assembly, the Tat system comprises two distinct complexes: a TatABC complex, containing multiple copies of TatA, TatB and TatC subunits, and a separate TatA complex, containing only TatA subunits. Substrates initially bind to the TatABC complex, which probably triggers association of the separate TatA complex to form the active translocon.

Its subcellular location is the cell inner membrane. Its function is as follows. Part of the twin-arginine translocation (Tat) system that transports large folded proteins containing a characteristic twin-arginine motif in their signal peptide across membranes. Together with TatC, TatB is part of a receptor directly interacting with Tat signal peptides. TatB may form an oligomeric binding site that transiently accommodates folded Tat precursor proteins before their translocation. The chain is Sec-independent protein translocase protein TatB from Yersinia pseudotuberculosis serotype I (strain IP32953).